Reading from the N-terminus, the 173-residue chain is MAEKRNIFLVGPMGAGKSTIGRQLAQQLNMEFYDSDHEIEKRTGADVGWVFDVEGEEGFRDREEKVINELTEKQGIVLATGGGSVKSRETRNRLSARGVVVYLETTIEKQLARTQRDKKRPLLQVETPPREVLEALAGERNPLYEEIADVTIRTDDQSAKVVANQIIHMLESN.

14–19 (GAGKST) provides a ligand contact to ATP. Residue serine 18 participates in Mg(2+) binding. Substrate is bound by residues aspartate 36, arginine 60, and glycine 82. Residue arginine 120 participates in ATP binding. A substrate-binding site is contributed by arginine 140. Glutamine 157 serves as a coordination point for ATP.

This sequence belongs to the shikimate kinase family. In terms of assembly, monomer. The cofactor is Mg(2+).

The protein resides in the cytoplasm. The catalysed reaction is shikimate + ATP = 3-phosphoshikimate + ADP + H(+). It functions in the pathway metabolic intermediate biosynthesis; chorismate biosynthesis; chorismate from D-erythrose 4-phosphate and phosphoenolpyruvate: step 5/7. In terms of biological role, catalyzes the specific phosphorylation of the 3-hydroxyl group of shikimic acid using ATP as a cosubstrate. This is Shikimate kinase 1 from Enterobacter sp. (strain 638).